Reading from the N-terminus, the 504-residue chain is uncharacterized protein (504 aa).

Residues 26 to 46 (ILFLLLGLIILVNISINVTTV) traverse the membrane as a helical segment. Polar residues predominate over residues 103 to 112 (PTQCSSSSTH). Disordered stretches follow at residues 103–180 (PTQC…TRPM), 313–402 (YDAR…PLTT), and 431–504 (QRLA…GKLN). Positions 113–128 (YFRKHSNDRRSRRRYC) are enriched in basic residues. The segment covering 135-147 (QIRQSNQQQSCHS) has biased composition (polar residues). Residues 313–324 (YDARDQWRRGTE) are compositionally biased toward basic and acidic residues. Positions 349–377 (SSQAHRQNFPSYTHSQPNHSPPQSVGYSS) are enriched in polar residues. Basic and acidic residues-rich tracts occupy residues 378–389 (RESHEVRRRAPD) and 467–478 (LELKRQVQENRG). Positions 494–504 (SLHRSRTGKLN) are enriched in basic residues.

It is found in the membrane. This is an uncharacterized protein from Rattus norvegicus (Rat).